A 282-amino-acid chain; its full sequence is Formamidopyrimidine-DNA glycosylase (282 aa).

Catalysis depends on proline 2, which acts as the Schiff-base intermediate with DNA. The active-site Proton donor is glutamate 3. Lysine 58 serves as the catalytic Proton donor; for beta-elimination activity. The DNA site is built by histidine 96, arginine 115, and lysine 152. The FPG-type zinc finger occupies 238–272 (HVYGRGGQPCERCGEEILKTVLGGRGTHYCPSCQN). Arginine 262 functions as the Proton donor; for delta-elimination activity in the catalytic mechanism.

Belongs to the FPG family. As to quaternary structure, monomer. Zn(2+) serves as cofactor.

It carries out the reaction Hydrolysis of DNA containing ring-opened 7-methylguanine residues, releasing 2,6-diamino-4-hydroxy-5-(N-methyl)formamidopyrimidine.. The enzyme catalyses 2'-deoxyribonucleotide-(2'-deoxyribose 5'-phosphate)-2'-deoxyribonucleotide-DNA = a 3'-end 2'-deoxyribonucleotide-(2,3-dehydro-2,3-deoxyribose 5'-phosphate)-DNA + a 5'-end 5'-phospho-2'-deoxyribonucleoside-DNA + H(+). In terms of biological role, involved in base excision repair of DNA damaged by oxidation or by mutagenic agents. Acts as a DNA glycosylase that recognizes and removes damaged bases. Has a preference for oxidized purines, such as 7,8-dihydro-8-oxoguanine (8-oxoG). Has AP (apurinic/apyrimidinic) lyase activity and introduces nicks in the DNA strand. Cleaves the DNA backbone by beta-delta elimination to generate a single-strand break at the site of the removed base with both 3'- and 5'-phosphates. This is Formamidopyrimidine-DNA glycosylase from Corynebacterium aurimucosum (strain ATCC 700975 / DSM 44827 / CIP 107346 / CN-1) (Corynebacterium nigricans).